Reading from the N-terminus, the 139-residue chain is Non-structural protein 1 (139 aa).

Residues 136-139 (DLNS) carry the DLNP; interaction with MAP1B motif.

It belongs to the pneumovirus non-structural protein 1 family. Monomer. Homomultimer. Heteromultimer with NS2. Interacts with the matrix protein M. Interacts with host ELOC and CUL2; this interaction allows NS1 to form an active E3 ligase with ELOC and CUL2. Interacts with host IRF3; this interaction leads to the disrupted association of IRF3 with CREBBP and thus reduced binding of IRF3 to the IFN-beta promoter. Interacts with host MAVS; this interaction prevents MAVS binding to RIGI and inhibits signaling pathway leading to interferon production. Interacts with host MAP1B/microtubule-associated protein 1B. Interacts with host TRIM25 (via SPRY domain); this interaction suppresses RIGI ubiquitination and results in decreased interaction between RIGI and MAVS.

The protein localises to the host cytoplasm. It is found in the host mitochondrion. Its subcellular location is the host nucleus. Functionally, plays a major role in antagonizing the type I IFN-mediated antiviral response by degrading or inhibiting multiple cellular factors required for either IFN induction or response pathways. Acts cooperatively with NS2 to repress activation and nuclear translocation of host IFN-regulatory factor IRF3. Also disrupts the association of IRF3 with CREBBP. Interacts with host mitochondrial-associated membrane (MAM) MAVS and prevents the interaction with RIGI. Interacts with TRIM25 to suppress TRIM25-mediated RIGI ubiquitination and thereby RIGI-MAVS interaction. Together with NS2, participates in the proteasomal degradation of host STAT2, IRF3, IRF7, TBK1 and RIGI through a NS-degradasome involving CUL2 and Elongin-C. The degradasome requires an intact mitochondrial MAVS. Decreases the levels of host TRAF3 and IKBKE/IKK-epsilon. As functions other than disruptions of the type I IFN-mediated antiviral signaling pathways, induces host SOCS1 and SOCS3 expression. Suppresses premature apoptosis by an NF-kappa-B-dependent, interferon-independent mechanism and thus facilitates virus growth. Additionally, NS1 may serve some inhibitory role in viral transcription and RNA replication. Suppresses proliferation and activation of host CD103+ CD8+ cytotoxic T-lymphocytes and Th17 helper T-lymphocytes. This Human respiratory syncytial virus B (strain 18537) protein is Non-structural protein 1 (1C).